The sequence spans 444 residues: uncharacterized protein (444 aa).

Position 268 is an N6-(pyridoxal phosphate)lysine (Lys-268).

Belongs to the class-III pyridoxal-phosphate-dependent aminotransferase family. The cofactor is pyridoxal 5'-phosphate.

This is an uncharacterized protein from Bacillus subtilis (strain 168).